The following is a 547-amino-acid chain: Membrane protein insertase YidC (547 aa).

The chain crosses the membrane as a helical span at residues 8 to 28; it reads LRLILAIALSFLFIALYSYFF. A compositionally biased stretch (low complexity) spans 37-50; that stretch reads QTTKQETTNNHTAT. The segment at 37-62 is disordered; sequence QTTKQETTNNHTATSPNAPNAQHFST. Residues 51–62 show a composition bias toward polar residues; the sequence is SPNAPNAQHFST. Transmembrane regions (helical) follow at residues 325–345, 348–368, 414–434, 449–469, and 495–515; these read VIEY…LDYL, FVGN…IILY, GANP…FFAI, WILW…PLLM, and LLPL…VLYW.

This sequence belongs to the OXA1/ALB3/YidC family. Type 1 subfamily. In terms of assembly, interacts with the Sec translocase complex via SecD. Specifically interacts with transmembrane segments of nascent integral membrane proteins during membrane integration.

The protein localises to the cell inner membrane. Required for the insertion and/or proper folding and/or complex formation of integral membrane proteins into the membrane. Involved in integration of membrane proteins that insert both dependently and independently of the Sec translocase complex, as well as at least some lipoproteins. Aids folding of multispanning membrane proteins. The protein is Membrane protein insertase YidC of Helicobacter pylori (strain ATCC 700392 / 26695) (Campylobacter pylori).